Reading from the N-terminus, the 214-residue chain is Adenylate kinase (214 aa).

Gly10–Thr15 is an ATP binding site. Residues Ser30 to Val59 form an NMP region. Residues Thr31, Arg36, Gln57–Val59, Gly85–Arg88, and Gln92 each bind AMP. The tract at residues Gly122–Asp159 is LID. Residues Arg123 and Thr132–Tyr133 each bind ATP. The AMP site is built by Arg156 and Arg167. Lys200 contributes to the ATP binding site.

The protein belongs to the adenylate kinase family. As to quaternary structure, monomer.

It localises to the cytoplasm. It catalyses the reaction AMP + ATP = 2 ADP. Its pathway is purine metabolism; AMP biosynthesis via salvage pathway; AMP from ADP: step 1/1. Catalyzes the reversible transfer of the terminal phosphate group between ATP and AMP. Plays an important role in cellular energy homeostasis and in adenine nucleotide metabolism. This is Adenylate kinase from Vibrio parahaemolyticus serotype O3:K6 (strain RIMD 2210633).